Reading from the N-terminus, the 158-residue chain is Cyclic pyranopterin monophosphate synthase (158 aa).

Substrate is bound by residues 76-78 (LCH) and 114-115 (ME). D129 is a catalytic residue.

It belongs to the MoaC family. In terms of assembly, homohexamer; trimer of dimers.

It carries out the reaction (8S)-3',8-cyclo-7,8-dihydroguanosine 5'-triphosphate = cyclic pyranopterin phosphate + diphosphate. It participates in cofactor biosynthesis; molybdopterin biosynthesis. Functionally, catalyzes the conversion of (8S)-3',8-cyclo-7,8-dihydroguanosine 5'-triphosphate to cyclic pyranopterin monophosphate (cPMP). This Shewanella woodyi (strain ATCC 51908 / MS32) protein is Cyclic pyranopterin monophosphate synthase.